A 700-amino-acid chain; its full sequence is MSRATPIQNYRNIGISAHIDAGKTTTTERILFYTGVNHKIGEVHDGAATMDWMEQEQERGITITSAATTCFWKGMDTSLPEHRINIIDTPGHVDFTIEVERSMRVLDGACMVYCAVGGVQPQSETVWRQANKYKVPRLAFVNKMDRTGANFFKVVEQMKLRLKASPVPMVIPIGAEENFTGVVDLLKMKAIIWDEASQGMKFTYSEIPAELVELAKEWREKMVEAAAESSEELMNKYLEEGDLTEAEIKLGIRTRTIASEIQPMYCGSAFKNKGVQRMLDAVIEFMPSPIDIPPVKGMDEDEAPVTRKADDEEKFSALAFKLMTDPFVGQLTFVRVYSGVLKKGDSVYNPIKGKKERIGRIVQMHANNREEVSEIRAGDIAACVGLKDVTTGETLCDPDAIVMLERMVFPEPVITQAVEPKTKADQEKMGIALQRLAQEDPSFRVKTDEESGQTLIAGMGELHLEIIVDRMKREFGVEANVGKPQVAYRETIRKTVEDAEGKFVRQSGGKGQYGHVVLKIEPNEAGKGIEFVDAIKGGVVPREYIPAVEKGINEAVTSGVLAGYPVVDVKVTLHFGSYHDVDSNELAFKMAAIFGFKEGCRKASPVILEPMMAVEVETPEDYAGNVMGDLSSRRGMVQGMEDMVGGGKAIKAEVPLSEMFGYSTTLRSMSQGRATYSMEFKHYSEAPRNVSEAIMASRAK.

Positions 8–290 (QNYRNIGISA…AVIEFMPSPI (283 aa)) constitute a tr-type G domain. Residues 17–24 (AHIDAGKT), 88–92 (DTPGH), and 142–145 (NKMD) each bind GTP.

It belongs to the TRAFAC class translation factor GTPase superfamily. Classic translation factor GTPase family. EF-G/EF-2 subfamily.

It localises to the cytoplasm. In terms of biological role, catalyzes the GTP-dependent ribosomal translocation step during translation elongation. During this step, the ribosome changes from the pre-translocational (PRE) to the post-translocational (POST) state as the newly formed A-site-bound peptidyl-tRNA and P-site-bound deacylated tRNA move to the P and E sites, respectively. Catalyzes the coordinated movement of the two tRNA molecules, the mRNA and conformational changes in the ribosome. The chain is Elongation factor G 1 from Polaromonas sp. (strain JS666 / ATCC BAA-500).